Reading from the N-terminus, the 338-residue chain is Methionine synthase (338 aa).

Zn(2+) is bound by residues H210, C212, E234, and C294.

This sequence belongs to the archaeal MetE family. The cofactor is Zn(2+).

It functions in the pathway amino-acid biosynthesis; L-methionine biosynthesis via de novo pathway. Functionally, catalyzes the transfer of a methyl group to L-homocysteine resulting in methionine formation. The physiological methyl donor is unknown. This Pyrococcus horikoshii (strain ATCC 700860 / DSM 12428 / JCM 9974 / NBRC 100139 / OT-3) protein is Methionine synthase.